Consider the following 282-residue polypeptide: Phosphatidylglycerol--prolipoprotein diacylglyceryl transferase (282 aa).

3 helical membrane-spanning segments follow: residues 18–38 (LSIKWYGIIIAVGILIGYFIA), 55–75 (VIFYSAIFGFIAARIYFVIFQ), and 89–109 (IWHGGIAIHGGLLGGFITGII). An a 1,2-diacyl-sn-glycero-3-phospho-(1'-sn-glycerol)-binding site is contributed by R137. Transmembrane regions (helical) follow at residues 203–223 (VGETFTLYLIWYSIGRFFVEG) and 235–255 (IRVAQLVSVILIIIGLVILIY).

The protein belongs to the Lgt family.

It localises to the cell membrane. The catalysed reaction is L-cysteinyl-[prolipoprotein] + a 1,2-diacyl-sn-glycero-3-phospho-(1'-sn-glycerol) = an S-1,2-diacyl-sn-glyceryl-L-cysteinyl-[prolipoprotein] + sn-glycerol 1-phosphate + H(+). It participates in protein modification; lipoprotein biosynthesis (diacylglyceryl transfer). Catalyzes the transfer of the diacylglyceryl group from phosphatidylglycerol to the sulfhydryl group of the N-terminal cysteine of a prolipoprotein, the first step in the formation of mature lipoproteins. The protein is Phosphatidylglycerol--prolipoprotein diacylglyceryl transferase of Staphylococcus haemolyticus (strain JCSC1435).